The chain runs to 213 residues: Large ribosomal subunit protein uL3 (213 aa).

Residue Q151 is modified to N5-methylglutamine.

Belongs to the universal ribosomal protein uL3 family. In terms of assembly, part of the 50S ribosomal subunit. Forms a cluster with proteins L14 and L19. Methylated by PrmB.

Its function is as follows. One of the primary rRNA binding proteins, it binds directly near the 3'-end of the 23S rRNA, where it nucleates assembly of the 50S subunit. In Rhizobium etli (strain ATCC 51251 / DSM 11541 / JCM 21823 / NBRC 15573 / CFN 42), this protein is Large ribosomal subunit protein uL3.